The primary structure comprises 574 residues: Choline transporter-like protein ctl1 (574 aa).

Asn-40 and Asn-101 each carry an N-linked (GlcNAc...) asparagine glycan. The next 8 membrane-spanning stretches (helical) occupy residues 144-164 (WGLT…LMVW), 189-209 (KDAI…VAIP), 211-231 (FLYF…VYLL), 246-266 (LMLL…YYVW), 291-311 (QITL…FIWV), 336-356 (WVLA…FHAL), 396-416 (YGLC…LHFL), and 434-456 (TSAS…VPYM). The N-linked (GlcNAc...) asparagine glycan is linked to Asn-457. The next 2 helical transmembrane spans lie at 485 to 505 (LLAA…NYSI) and 511 to 531 (FYGY…IGAI). A glycan (N-linked (GlcNAc...) asparagine) is linked at Asn-558.

This sequence belongs to the CTL (choline transporter-like) family. In terms of assembly, interacts with atg9.

The protein resides in the endoplasmic reticulum membrane. It localises to the preautophagosomal structure membrane. In terms of biological role, required for the normal organization of the preautophagosomal structure (PAS) and for the correct subcellular location of atg9. The protein is Choline transporter-like protein ctl1 (ctl1) of Schizosaccharomyces pombe (strain 972 / ATCC 24843) (Fission yeast).